We begin with the raw amino-acid sequence, 115 residues long: MRFFLSGYVGRRIGETFPWGTFVVNVSGAFVIGTAAGLGARLGGIFSTTIFHEFIMVGLLGGYTTVSSFCLQSVNLMLDGEQRQALFNIVASALLCVLAVAAGYGGIMWIMEWPG.

The next 2 membrane-spanning stretches (helical) occupy residues 19 to 39 and 42 to 62; these read WGTF…AGLG and LGGI…LLGG. Na(+) is bound by residues G61 and T64. A helical transmembrane segment spans residues 89–109; sequence IVASALLCVLAVAAGYGGIMW.

The protein belongs to the fluoride channel Fluc/FEX (TC 1.A.43) family.

It is found in the cell inner membrane. It carries out the reaction fluoride(in) = fluoride(out). With respect to regulation, na(+) is not transported, but it plays an essential structural role and its presence is essential for fluoride channel function. Functionally, fluoride-specific ion channel. Important for reducing fluoride concentration in the cell, thus reducing its toxicity. This is Fluoride-specific ion channel FluC 4 from Brucella melitensis biotype 1 (strain ATCC 23456 / CCUG 17765 / NCTC 10094 / 16M).